The chain runs to 606 residues: MKKIQQLLMLSLISSTLIACGGGGGGGSTPTTSSSPQSSSPASTPSSASSSSIISSSSLSSSLSSSSLSSSSLSSSSASSVSSSSVAASEGNVVIEVDMANGWRGNASGSTSHSGITYSADGVTFAALGDGVGAVFDIARPTTLEDAVIAMVVNVSAEFKASEANLQIFAQLKEDWSKGEWDCLAASSELTADTDLTLTCTIDEDDDKFNQTARDVQVGIQAKGTPAGTITIKSVTITLAQEAYSANVDHLRDLAPSDFPIGVAVSNTDSATYNLLTNSREQAVVKKHFNHLTAGNIMKMSYMQPTEGNFNFTNADAFVDWATENNMTVHGHALVWHSDYQVPNFMKNWAGSAEDFLAALDTHITTIVDHYEAKGNLVSWDVVNEAIDDNSPANFRTTDSAFYVKSGNSSVYIERAFQTARAADPAVILYYNDYNIEQNNAKTTKMVDMVKDFQARSIPIDGVGFQMHVCMNYPSIANISAAMKKVVDLGLLVKITELDVAVNQPHCDAYPANKINPLTEAAQLAQKKRYCDVVKAYLDTVPVNQRGGISVWGTTDANTWLDGLYREQFEDEKISWPLLFDNNYNDKPALRGFADALIGTQCTNTH.

The N-terminal stretch at Met-1–Ala-19 is a signal peptide. Cys-20 carries the N-palmitoyl cysteine lipid modification. The S-diacylglycerol cysteine moiety is linked to residue Cys-20. Residues Gly-23–Ser-64 are disordered. Over residues Thr-29–Ser-64 the composition is skewed to low complexity. Residues Gly-91–Glu-242 form the CBM15 domain. Positions 106 and 171 each coordinate a carbohydrate. The cysteines at positions 183 and 200 are disulfide-linked. Gln-217 is an a carbohydrate binding site. The GH10 domain maps to Ser-245–Ala-596. Substrate contacts are provided by residues Asn-296–Lys-299, His-332, and Asn-384. Glu-385 (proton donor) is an active-site residue. Glu-497 serves as the catalytic Nucleophile. A substrate-binding site is contributed by Trp-552.

It belongs to the glycosyl hydrolase 10 (cellulase F) family.

The protein resides in the cell outer membrane. The enzyme catalyses Endohydrolysis of (1-&gt;4)-beta-D-xylosidic linkages in xylans.. The protein operates within glycan degradation; xylan degradation. Endo-acting xylanase which specifically cleaves internal linkages on the xylan backbone, releasing xylooligosaccharides. Is able to hydrolyze oat spelt xylan, the arabinoxylans from wheat and rye, and glucuronoxylan. Also displays very low activity against xylooligosaccharides. During the xylan degradation process, Xyn10C may act on the soluble xylans and long xylooligosaccharides products released by the secreted xylanases Xyn11A, Xyn11B and Xyn10A. In Cellvibrio japonicus (Pseudomonas fluorescens subsp. cellulosa), this protein is Endo-beta-1,4-xylanase Xyn10C (xyn10C).